We begin with the raw amino-acid sequence, 323 residues long: Sphingolipid delta(4)-desaturase DES1 (323 aa).

Gly2 is lipidated: N-myristoyl glycine. A run of 2 helical transmembrane segments spans residues 41 to 61 (HNLI…FYLV) and 68 to 88 (WVIF…TLAI). Positions 89–93 (HEISH) match the Histidine box-1 motif. Residues 104–124 (WNRWFGMFANLSLGVPYSISF) traverse the membrane as a helical segment. A Histidine box-2 motif is present at residues 128 to 132 (HMDHH). The next 3 membrane-spanning stretches (helical) occupy residues 152-172 (FFCT…FYAF), 184-204 (YLEI…YYVF), and 209-229 (LVYM…SGHF). The Histidine box-3 motif lies at 259 to 263 (HNEHH). Residue Ser307 is modified to Phosphoserine.

The protein belongs to the fatty acid desaturase type 1 family. DEGS subfamily. Interacts with RLBP1; the interaction increases synthesis of chromophore-precursors by DEGS1. Myristoylation can target the enzyme to the mitochondria leading to an increase in ceramide levels. Detected in testis. Detected in pachytene spermatocytes and round spermatids. Expressed in retina and retinal pigment epithelium by Mueller cells (at protein level).

It localises to the mitochondrion membrane. Its subcellular location is the endoplasmic reticulum membrane. It catalyses the reaction an N-acylsphinganine + 2 Fe(II)-[cytochrome b5] + O2 + 2 H(+) = an N-acylsphing-4-enine + 2 Fe(III)-[cytochrome b5] + 2 H2O. It carries out the reaction all-trans-retinol = 11-cis-retinol. The enzyme catalyses all-trans-retinol = 9-cis-retinol. The catalysed reaction is all-trans-retinol = 13-cis-retinol. It catalyses the reaction 11-cis-retinol = 13-cis-retinol. It carries out the reaction 11-cis-retinol = 9-cis-retinol. Functionally, has sphingolipid-delta-4-desaturase activity. Converts D-erythro-sphinganine to D-erythro-sphingosine (E-sphing-4-enine). Catalyzes the equilibrium isomerization of retinols. The sequence is that of Sphingolipid delta(4)-desaturase DES1 from Mus musculus (Mouse).